The following is a 289-amino-acid chain: Epoxyqueuosine reductase (289 aa).

The Proton donor role is filled by D111. The 4Fe-4S ferredoxin-type domain occupies 156–185; the sequence is QGDRPHSQHCGTCTRCLEACPTQAIVEPFV. [4Fe-4S] cluster-binding residues include C165, C168, C171, C175, C191, C219, C222, and C226.

It belongs to the QueG family. In terms of assembly, monomer. It depends on cob(II)alamin as a cofactor. The cofactor is [4Fe-4S] cluster.

It is found in the cytoplasm. It carries out the reaction epoxyqueuosine(34) in tRNA + AH2 = queuosine(34) in tRNA + A + H2O. It functions in the pathway tRNA modification; tRNA-queuosine biosynthesis. Catalyzes the conversion of epoxyqueuosine (oQ) to queuosine (Q), which is a hypermodified base found in the wobble positions of tRNA(Asp), tRNA(Asn), tRNA(His) and tRNA(Tyr). The polypeptide is Epoxyqueuosine reductase (Synechocystis sp. (strain ATCC 27184 / PCC 6803 / Kazusa)).